Consider the following 451-residue polypeptide: Tubulin alpha-2 chain (451 aa).

Residue Gln11 coordinates GTP. Lys40 is modified (N6-acetyllysine). Glu71, Gly144, Thr145, Thr179, Asn206, and Asn228 together coordinate GTP. Residue Glu71 participates in Mg(2+) binding. Glu254 is a catalytic residue.

The protein belongs to the tubulin family. As to quaternary structure, dimer of alpha and beta chains. A typical microtubule is a hollow water-filled tube with an outer diameter of 25 nm and an inner diameter of 15 nM. Alpha-beta heterodimers associate head-to-tail to form protofilaments running lengthwise along the microtubule wall with the beta-tubulin subunit facing the microtubule plus end conferring a structural polarity. Microtubules usually have 13 protofilaments but different protofilament numbers can be found in some organisms and specialized cells. It depends on Mg(2+) as a cofactor. In terms of processing, undergoes a tyrosination/detyrosination cycle, the cyclic removal and re-addition of a C-terminal tyrosine residue by the enzymes tubulin tyrosine carboxypeptidase (TTCP) and tubulin tyrosine ligase (TTL), respectively. Acetylation of alpha chains at Lys-40 stabilizes microtubules and affects affinity and processivity of microtubule motors. This modification has a role in multiple cellular functions, ranging from cell motility, cell cycle progression or cell differentiation to intracellular trafficking and signaling.

It localises to the cytoplasm. Its subcellular location is the cytoskeleton. The catalysed reaction is GTP + H2O = GDP + phosphate + H(+). In terms of biological role, tubulin is the major constituent of microtubules, a cylinder consisting of laterally associated linear protofilaments composed of alpha- and beta-tubulin heterodimers. Microtubules grow by the addition of GTP-tubulin dimers to the microtubule end, where a stabilizing cap forms. Below the cap, tubulin dimers are in GDP-bound state, owing to GTPase activity of alpha-tubulin. The polypeptide is Tubulin alpha-2 chain (TUBA2) (Zea mays (Maize)).